The sequence spans 332 residues: tRNA uridine(34) hydroxylase (332 aa).

Positions 123–217 (SDPEVLLVDT…YLEEVKQEES (95 aa)) constitute a Rhodanese domain. Catalysis depends on Cys177, which acts as the Cysteine persulfide intermediate. The segment at 302–332 (SDVGAVIQSRRDNKENLKKSQVKLNNKKYNK) is disordered. Residues 310-319 (SRRDNKENLK) show a composition bias toward basic and acidic residues.

This sequence belongs to the TrhO family.

The enzyme catalyses uridine(34) in tRNA + AH2 + O2 = 5-hydroxyuridine(34) in tRNA + A + H2O. Functionally, catalyzes oxygen-dependent 5-hydroxyuridine (ho5U) modification at position 34 in tRNAs. The protein is tRNA uridine(34) hydroxylase of Shewanella woodyi (strain ATCC 51908 / MS32).